The following is a 453-amino-acid chain: Proton extrusion protein PxcA (453 aa).

A disordered region spans residues 147–189 (SQDKETQTLDNKSTNQTNSKLSNNNKISSGQNDSRLESASQKT). Positions 154–163 (TLDNKSTNQT) are enriched in polar residues. The segment covering 164–175 (NSKLSNNNKISS) has biased composition (low complexity). Over residues 176–189 (GQNDSRLESASQKT) the composition is skewed to polar residues. The next 4 membrane-spanning stretches (helical) occupy residues 235 to 255 (FILL…TFLL), 330 to 350 (SIGN…VIVS), 377 to 397 (LIIL…WEVI), and 413 to 433 (FNFL…KYWI).

It belongs to the CemA family.

It localises to the cell inner membrane. Its function is as follows. Required for H(+) efflux immediately after light irradiation to form a rapid H(+) concentration gradient across the thylakoid membranes. Together with PxcL, contributes to transient H(+) uptake following dark to light transition. This is Proton extrusion protein PxcA from Crocosphaera subtropica (strain ATCC 51142 / BH68) (Cyanothece sp. (strain ATCC 51142)).